Consider the following 305-residue polypeptide: Glycine--tRNA ligase alpha subunit (305 aa).

This sequence belongs to the class-II aminoacyl-tRNA synthetase family. In terms of assembly, tetramer of two alpha and two beta subunits.

Its subcellular location is the cytoplasm. It catalyses the reaction tRNA(Gly) + glycine + ATP = glycyl-tRNA(Gly) + AMP + diphosphate. The chain is Glycine--tRNA ligase alpha subunit from Streptococcus thermophilus (strain CNRZ 1066).